We begin with the raw amino-acid sequence, 183 residues long: Protein vem-1 (183 aa).

Residues 9 to 29 (FTMYDAVFLVVVLGFFFYWLT) form a helical membrane-spanning segment. A Cytochrome b5 heme-binding domain is found at 47–146 (MSDMTVEELR…FKYLTVGRLV (100 aa)).

Belongs to the cytochrome b5 family. MAPR subfamily. As to quaternary structure, interacts with unc-40 (via cytoplasmic domain). In terms of tissue distribution, expressed in the AVG pioneer midline neuron and in several nerve ring neurons that extend projecting axons into the right ventral nerve cord.

It localises to the membrane. It is found in the cell projection. The protein resides in the axon. Its function is as follows. Transmembrane protein required for the axon guidance of a subset of ventral nerve cord-associated interneurons and motor neurons. May function with the netrin receptor unc-40 in axon guidance. This Caenorhabditis elegans protein is Protein vem-1.